The chain runs to 443 residues: Serine/threonine-protein kinase Nek2 (443 aa).

The region spanning 8–271 (YEVLHSIGTG…VEEILESPLI (264 aa)) is the Protein kinase domain. ATP is bound by residues 14–22 (IGTGSYGRC) and K37. Residue D141 is the Proton acceptor of the active site. Position 170 is a phosphothreonine; by autocatalysis (T170). Phosphoserine; by autocatalysis is present on S171. Residues T175 and T179 each carry the phosphothreonine; by autocatalysis modification. S184 carries the phosphoserine modification. S241 carries the phosphoserine; by autocatalysis modification. The tract at residues 264 to 443 (EILESPLIAD…LKSRQILGMR (180 aa)) is interaction with PCNT. Residues 282–292 (NLERRGRRSGE) show a composition bias toward basic and acidic residues. The disordered stretch occupies residues 282–303 (NLERRGRRSGEPSKLPDSSPVL). S300 is modified (phosphoserine). Residues 301–443 (PVLSELKLKE…LKSRQILGMR (143 aa)) are interaction with CEP85. Positions 303 to 361 (LSELKLKERQLQDREQALRAREDILEQKERELCIRERLAEDKLARAESLMKNYSLLKEH) form a coiled coil. The leucine-zipper stretch occupies residues 306 to 334 (LKLKERQLQDREQALRAREDILEQKEREL). Residues 329–443 (QKERELCIRE…LKSRQILGMR (115 aa)) form a necessary for interaction with MAD1L1 region. The tract at residues 333–370 (ELCIRERLAEDKLARAESLMKNYSLLKEHRLLCLAGGP) is required for microtubule binding and for localization to the centrosomes. Phosphoserine; by STK3/MST2 is present on S356. Residues 383-402 (VHFHGESKENTARSENSESY) form a disordered region. Residues 385-398 (FHGESKENTARSEN) are compositionally biased toward basic and acidic residues. 3 positions are modified to phosphoserine: S389, S396, and S401. Residues 402–437 (YLAKSKCRDLKKRLHAAQLRAQALADIEKNYQLKSR) are interaction with SAV1 and STK3/MST2. Residues 403–427 (LAKSKCRDLKKRLHAAQLRAQALAD) are a coiled coil. At S436 the chain carries Phosphoserine; by STK3/MST2.

This sequence belongs to the protein kinase superfamily. NEK Ser/Thr protein kinase family. NIMA subfamily. As to quaternary structure, forms homodimers and heterodimers. Interacts with CDC20, CTNB1, MAD1L1, MAD2L1, MAPK, NEK11, NPM1, NDC80, PCNT, PPP1CA, PPP1CC and SGO1. Interacts with STK3/MST2 (via SARAH domain) and SAV1 (via SARAH domain). Interacts with NECAB3 and HMGA2. Interacts with CEP68; the interaction leads to phosphorylation of CEP68. Interacts with CNTLN; the interaction leads to phosphorylation of CNTLN. Interacts with CEP85. The cofactor is Mg(2+). Post-translationally, activated by autophosphorylation. Protein phosphatase 1 represses autophosphorylation and activation of isoform 1 by dephosphorylation. Phosphorylation by STK3/MST2 is necessary for its localization to the centrosome. As to expression, most abundantly expressed in testis. Low levels found in mid-gestation embryo, ovary, placenta, intestine, thymus and skin. Within the testis, expression restricted to germ cells with highest levels detected in spermatocytes at pachytene and diplotene stages. Also expressed in meiotic pachytene oocytes.

It is found in the nucleus. It localises to the nucleolus. The protein localises to the cytoplasm. Its subcellular location is the cytoskeleton. The protein resides in the microtubule organizing center. It is found in the centrosome. It localises to the spindle pole. The protein localises to the chromosome. Its subcellular location is the centromere. The protein resides in the kinetochore. The catalysed reaction is L-seryl-[protein] + ATP = O-phospho-L-seryl-[protein] + ADP + H(+). It catalyses the reaction L-threonyl-[protein] + ATP = O-phospho-L-threonyl-[protein] + ADP + H(+). Its activity is regulated as follows. Its catalytic activity is inhibited by the inhibitor CCT241950. In the presence of this inhibitor, displays an autoinhibited conformation: Tyr-70 side chain points into the active site, interacts with the activation loop, and blocks the alphaC helix. Protein kinase which is involved in the control of centrosome separation and bipolar spindle formation in mitotic cells and chromatin condensation in meiotic cells. Regulates centrosome separation (essential for the formation of bipolar spindles and high-fidelity chromosome separation) by phosphorylating centrosomal proteins such as CROCC, CEP250 and NINL, resulting in their displacement from the centrosomes. Regulates kinetochore microtubule attachment stability in mitosis via phosphorylation of NDC80. Involved in regulation of mitotic checkpoint protein complex via phosphorylation of CDC20 and MAD2L1. Plays an active role in chromatin condensation during the first meiotic division through phosphorylation of HMGA2. Phosphorylates: PPP1CC; SGO1; NECAB3 and NPM1. Essential for localization of MAD2L1 to kinetochore and MAPK1 and NPM1 to the centrosome. Phosphorylates CEP68 and CNTLN directly or indirectly. NEK2-mediated phosphorylation of CEP68 promotes CEP68 dissociation from the centrosome and its degradation at the onset of mitosis. Phosphorylates and activates NEK11 in G1/S-arrested cells. Involved in the regulation of centrosome disjunction. The sequence is that of Serine/threonine-protein kinase Nek2 (Nek2) from Mus musculus (Mouse).